Here is a 43-residue protein sequence, read N- to C-terminus: Pre-protein VI (43 aa).

The propeptide occupies 1-33 (MEGINFSALAPRYGSRPMLSSWSDIGTSSMNGG).

This sequence belongs to the adenoviridae protein VI family. In terms of assembly, interacts with hexon protein; this interaction allows nuclear import of hexon trimers and possibly pre-capsid assembly. Interacts (via C-terminal NLS) with importin alpha/beta. As to quaternary structure, interacts (via PPxY motif) with host NEDD4 ubiquitine ligase; this interaction might play a role in virus intracellular transport during entry. Part of a complex composed of the core-capsid bridging protein, the endosome lysis protein VI and the hexon-linking protein VIII; these interactions bridge the virus core to the capsid. Interacts with peripentonal hexons; this interaction stabilizes the capsid by gluing two peripentonal hexons together and joining them with an adjacent group-of-nine hexon. Protease cofactor: Heterodimer with the viral protease; disulfide-linked. Interacts with the viral protease. Ubiquitinated by Nedd4 following partial capsid disassembly; which might play a role in intracellular virus movement during entry. Post-translationally, protease cofactor: Contains the major nuclear import and export signals. Proteolytically removed during virion maturation. The processing of the C-terminus turns the precursor into a mature viral structural protein and abrogates its ability to promote hexon import and act as a potential chaperone protein.

The protein resides in the host nucleus. It localises to the host cytoplasm. Its subcellular location is the virion. In terms of biological role, during virus assembly, promotes hexon trimers nuclear import through nuclear pore complexes via an importin alpha/beta-dependent mechanism. By analogy to herpesviruses capsid assembly, might act as a chaperone to promote the formation of the icosahedral capsid. Its function is as follows. Structural component of the virion that provides increased stability to the particle shell through its interaction with the core-capsid bridging protein and the hexon-linking protein VIII. Fibers shedding during virus entry into host cell allows the endosome lysis protein to be exposed as a membrane-lytic peptide. Exhibits pH-independent membrane fragmentation activity and probably mediates viral rapid escape from host endosome via organellar membrane lysis. It is not clear if it then remains partially associated with the capsid and involved in the intracellular microtubule-dependent transport of capsid to the nucleus, or if it is lost during endosomal penetration. The sequence is that of Pre-protein VI from Bovine adenovirus 2 (BAdV-2).